The chain runs to 475 residues: Trifunctional enzyme subunit beta, mitochondrial (475 aa).

A mitochondrion-targeting transit peptide spans 1–34 (MTTILTSTFRNLSTTSKWALRSSIRPLSCSSQLH). Lys-53 carries the N6-succinyllysine modification. At Lys-73 the chain carries N6-acetyllysine; alternate. Position 73 is an N6-succinyllysine; alternate (Lys-73). Cys-139 acts as the Acyl-thioester intermediate in catalysis. The stretch at 174–221 (IRHSRNMRKMMLDLNKAKTLGQRLSLLSKFRLNFLSPELPAVAEFSTN) is an intramembrane region. Lys-189 bears the N6-acetyllysine; alternate mark. Lys-189 is subject to N6-succinyllysine; alternate. An N6-succinyllysine mark is found at Lys-191, Lys-273, and Lys-292. Lys-294 is subject to N6-acetyllysine; alternate. Residue Lys-294 is modified to N6-succinyllysine; alternate. At Lys-299 the chain carries N6-acetyllysine. The residue at position 333 (Lys-333) is an N6-acetyllysine; alternate. Residue Lys-333 is modified to N6-succinyllysine; alternate. 2 positions are modified to N6-acetyllysine: Lys-349 and Lys-362. The active-site Proton donor/acceptor is the Cys-459.

The protein belongs to the thiolase-like superfamily. Thiolase family. As to quaternary structure, heterotetramer of 2 alpha/HADHA and 2 beta/HADHB subunits; forms the mitochondrial trifunctional enzyme. Also purified as higher order heterooligomers including a 4 alpha/HADHA and 4 beta/HADHB heterooligomer which physiological significance remains unclear. The mitochondrial trifunctional enzyme interacts with MTLN. Interacts with RSAD2/viperin. In terms of processing, acetylation of Lys-202 is observed in liver mitochondria from fasted mice but not from fed mice.

The protein localises to the mitochondrion. It is found in the mitochondrion inner membrane. It localises to the mitochondrion outer membrane. Its subcellular location is the endoplasmic reticulum. The catalysed reaction is an acyl-CoA + acetyl-CoA = a 3-oxoacyl-CoA + CoA. It catalyses the reaction butanoyl-CoA + acetyl-CoA = 3-oxohexanoyl-CoA + CoA. The enzyme catalyses hexanoyl-CoA + acetyl-CoA = 3-oxooctanoyl-CoA + CoA. It carries out the reaction octanoyl-CoA + acetyl-CoA = 3-oxodecanoyl-CoA + CoA. The catalysed reaction is decanoyl-CoA + acetyl-CoA = 3-oxododecanoyl-CoA + CoA. It catalyses the reaction dodecanoyl-CoA + acetyl-CoA = 3-oxotetradecanoyl-CoA + CoA. The enzyme catalyses tetradecanoyl-CoA + acetyl-CoA = 3-oxohexadecanoyl-CoA + CoA. It functions in the pathway lipid metabolism; fatty acid beta-oxidation. Mitochondrial trifunctional enzyme catalyzes the last three of the four reactions of the mitochondrial beta-oxidation pathway. The mitochondrial beta-oxidation pathway is the major energy-producing process in tissues and is performed through four consecutive reactions breaking down fatty acids into acetyl-CoA. Among the enzymes involved in this pathway, the trifunctional enzyme exhibits specificity for long-chain fatty acids. Mitochondrial trifunctional enzyme is a heterotetrameric complex composed of two proteins, the trifunctional enzyme subunit alpha/HADHA carries the 2,3-enoyl-CoA hydratase and the 3-hydroxyacyl-CoA dehydrogenase activities, while the trifunctional enzyme subunit beta/HADHB described here bears the 3-ketoacyl-CoA thiolase activity. The sequence is that of Trifunctional enzyme subunit beta, mitochondrial (Hadhb) from Mus musculus (Mouse).